The following is a 482-amino-acid chain: Magnesium-dependent glutamate N-prenyltransferase (482 aa).

Residues Asn351, Thr355, Glu359, and Phe366 each coordinate Mg(2+).

It belongs to the terpene synthase family. Mg(2+) serves as cofactor.

It catalyses the reaction (2E)-geranyl diphosphate + L-glutamate = N-geranyl-L-glutamate + diphosphate. It participates in secondary metabolite biosynthesis. In terms of biological role, magnesium-dependent glutamate N-prenyltransferase: part of the gene cluster that mediates the biosynthesis of domoic acid (DA) and derivatives, natural products with neurochemical activity acting as ionotropic glutamate receptor (iGluR) agonists, thus being neurotoxins causing amnesic shellfish poisoning (ASP). Catalyzes the conversion of L-glutamic acid (L-Glu) to N-geranyl-L-glutamic acid (NGG) in the presence of geranyl diphosphate (GPP). Also able to catalyze the formation of farnesyl-L-glutamate from farnesyl diphosphate (FPP). Cannot use dimethylallyl diphosphate (DMAPP) as substrate. In Pseudo-nitzschia multiseries (Marine planktonic diatom), this protein is Magnesium-dependent glutamate N-prenyltransferase.